Consider the following 273-residue polypeptide: Dermonecrotic toxin LhSicTox-alphaIA2bi (273 aa).

Mg(2+) contacts are provided by Glu25 and Asp27. His41 functions as the Nucleophile in the catalytic mechanism. Disulfide bonds link Cys45/Cys51 and Cys47/Cys190. Asp85 lines the Mg(2+) pocket.

The protein belongs to the arthropod phospholipase D family. Class II subfamily. Requires Mg(2+) as cofactor. In terms of tissue distribution, expressed by the venom gland.

Its subcellular location is the secreted. The enzyme catalyses an N-(acyl)-sphingosylphosphocholine = an N-(acyl)-sphingosyl-1,3-cyclic phosphate + choline. It catalyses the reaction an N-(acyl)-sphingosylphosphoethanolamine = an N-(acyl)-sphingosyl-1,3-cyclic phosphate + ethanolamine. The catalysed reaction is a 1-acyl-sn-glycero-3-phosphocholine = a 1-acyl-sn-glycero-2,3-cyclic phosphate + choline. It carries out the reaction a 1-acyl-sn-glycero-3-phosphoethanolamine = a 1-acyl-sn-glycero-2,3-cyclic phosphate + ethanolamine. Its function is as follows. Dermonecrotic toxins cleave the phosphodiester linkage between the phosphate and headgroup of certain phospholipids (sphingolipid and lysolipid substrates), forming an alcohol (often choline) and a cyclic phosphate. This toxin acts on sphingomyelin (SM). It may also act on ceramide phosphoethanolamine (CPE), lysophosphatidylcholine (LPC) and lysophosphatidylethanolamine (LPE), but not on lysophosphatidylserine (LPS), and lysophosphatidylglycerol (LPG). It acts by transphosphatidylation, releasing exclusively cyclic phosphate products as second products. Induces dermonecrosis, hemolysis, increased vascular permeability, edema, inflammatory response, and platelet aggregation. The chain is Dermonecrotic toxin LhSicTox-alphaIA2bi from Loxosceles hirsuta (Recluse spider).